The primary structure comprises 193 residues: Adenine phosphoribosyltransferase (193 aa).

It belongs to the purine/pyrimidine phosphoribosyltransferase family. In terms of assembly, homodimer.

It is found in the cytoplasm. It carries out the reaction AMP + diphosphate = 5-phospho-alpha-D-ribose 1-diphosphate + adenine. The protein operates within purine metabolism; AMP biosynthesis via salvage pathway; AMP from adenine: step 1/1. Catalyzes a salvage reaction resulting in the formation of AMP, that is energically less costly than de novo synthesis. The polypeptide is Adenine phosphoribosyltransferase (Chromobacterium violaceum (strain ATCC 12472 / DSM 30191 / JCM 1249 / CCUG 213 / NBRC 12614 / NCIMB 9131 / NCTC 9757 / MK)).